The primary structure comprises 170 residues: Acireductone dioxygenase (170 aa).

H99, H101, E105, and H144 together coordinate Fe(2+). 4 residues coordinate Ni(2+): H99, H101, E105, and H144.

Belongs to the acireductone dioxygenase (ARD) family. In terms of assembly, monomer. Fe(2+) serves as cofactor. Ni(2+) is required as a cofactor.

The catalysed reaction is 1,2-dihydroxy-5-(methylsulfanyl)pent-1-en-3-one + O2 = 3-(methylsulfanyl)propanoate + CO + formate + 2 H(+). It catalyses the reaction 1,2-dihydroxy-5-(methylsulfanyl)pent-1-en-3-one + O2 = 4-methylsulfanyl-2-oxobutanoate + formate + 2 H(+). Its pathway is amino-acid biosynthesis; L-methionine biosynthesis via salvage pathway; L-methionine from S-methyl-5-thio-alpha-D-ribose 1-phosphate: step 5/6. In terms of biological role, catalyzes 2 different reactions between oxygen and the acireductone 1,2-dihydroxy-3-keto-5-methylthiopentene (DHK-MTPene) depending upon the metal bound in the active site. Fe-containing acireductone dioxygenase (Fe-ARD) produces formate and 2-keto-4-methylthiobutyrate (KMTB), the alpha-ketoacid precursor of methionine in the methionine recycle pathway. Ni-containing acireductone dioxygenase (Ni-ARD) produces methylthiopropionate, carbon monoxide and formate, and does not lie on the methionine recycle pathway. This Bacillus cytotoxicus (strain DSM 22905 / CIP 110041 / 391-98 / NVH 391-98) protein is Acireductone dioxygenase.